The sequence spans 347 residues: 3-isopropylmalate dehydrogenase (347 aa).

Positions 94, 104, 128, and 219 each coordinate substrate. Mg(2+) contacts are provided by Asp219, Asp243, and Asp247. 279–291 (GSAPDIAGQGKAD) serves as a coordination point for NAD(+).

It belongs to the isocitrate and isopropylmalate dehydrogenases family. LeuB type 2 subfamily. In terms of assembly, homodimer. It depends on Mg(2+) as a cofactor. The cofactor is Mn(2+).

Its subcellular location is the cytoplasm. The enzyme catalyses (2R,3S)-3-isopropylmalate + NAD(+) = 4-methyl-2-oxopentanoate + CO2 + NADH. It participates in amino-acid biosynthesis; L-leucine biosynthesis; L-leucine from 3-methyl-2-oxobutanoate: step 3/4. Catalyzes the oxidation of 3-carboxy-2-hydroxy-4-methylpentanoate (3-isopropylmalate) to 3-carboxy-4-methyl-2-oxopentanoate. The product decarboxylates to 4-methyl-2 oxopentanoate. The polypeptide is 3-isopropylmalate dehydrogenase (Streptomyces griseus subsp. griseus (strain JCM 4626 / CBS 651.72 / NBRC 13350 / KCC S-0626 / ISP 5235)).